We begin with the raw amino-acid sequence, 144 residues long: MKTFSAKPHEVKHEWFVVDATDKVLGRLAAAIAHRLRGKHKPIYTPHVDTGDYIVVINVDKLRVTGNKAEDKIYYRHSGYPGGLYETTFKKMHARFPARPLEKAVKGMLPKGPLGYAMIKKLKIYAGDIHPHAAQQPQSLEINA.

It belongs to the universal ribosomal protein uL13 family. In terms of assembly, part of the 50S ribosomal subunit.

In terms of biological role, this protein is one of the early assembly proteins of the 50S ribosomal subunit, although it is not seen to bind rRNA by itself. It is important during the early stages of 50S assembly. This is Large ribosomal subunit protein uL13 from Nitrosomonas eutropha (strain DSM 101675 / C91 / Nm57).